A 423-amino-acid chain; its full sequence is Progestin and adipoQ receptor-like protein 1 (423 aa).

Over 1-201 (MDPDEVNQAL…KSIWSLHTET (201 aa)) the chain is Cytoplasmic. Positions 54 to 140 (VVSPTNSDDE…DEDELEVDVK (87 aa)) are disordered. The segment covering 60–69 (SDDEEGEFCS) has biased composition (acidic residues). Basic residues predominate over residues 104-114 (TVLRYRRKKGG). The chain crosses the membrane as a helical span at residues 202–222 (GNIWTHLIGCVAFFLLACWFL). Topologically, residues 223–234 (TRPDNHIQFQEK) are extracellular. The helical transmembrane segment at 235–252 (VVFSFFFAGAVSVSDSRS) threads the bilayer. Residues 253-288 (PSTPSRVIRSTSSRYSANSTIWESRCSLSARLFQPK) are Cytoplasmic-facing. Residues 289–309 (ITYIAMVCVLGIGAIVVSLWD) traverse the membrane as a helical segment. Residues 310 to 320 (KFSESKYRPVR) are Extracellular-facing. Residues 321–341 (AAVFVGMGCSGVIPTIHYIIT) form a helical membrane-spanning segment. Residues 342 to 351 (DGVHSLFADN) are Cytoplasmic-facing. A helical membrane pass occupies residues 352-372 (SFHWLLLMAFLYLLGAALYAT). At 373–392 (RTPERFFPGKCDIWFQSHQL) the chain is on the extracellular side. The helical transmembrane segment at 393–413 (FHTCVVIAAFVHYYGISEMAF) threads the bilayer. The Cytoplasmic portion of the chain corresponds to 414–423 (ARLNEQCPVR).

Belongs to the ADIPOR family.

The protein resides in the membrane. Functionally, probable receptor, which may be involved in metabolic pathways that regulate lipid metabolism such as fatty acid oxidation. This is Progestin and adipoQ receptor-like protein 1 from Caenorhabditis briggsae.